Reading from the N-terminus, the 137-residue chain is 5-hydroxyisourate hydrolase (137 aa).

A signal peptide spans M1–A23. H32, R70, and Y134 together coordinate substrate.

It belongs to the transthyretin family. 5-hydroxyisourate hydrolase subfamily. Homotetramer.

It localises to the periplasm. The catalysed reaction is 5-hydroxyisourate + H2O = 5-hydroxy-2-oxo-4-ureido-2,5-dihydro-1H-imidazole-5-carboxylate + H(+). Its function is as follows. Catalyzes the hydrolysis of 5-hydroxyisourate (HIU) to 2-oxo-4-hydroxy-4-carboxy-5-ureidoimidazoline (OHCU). The polypeptide is 5-hydroxyisourate hydrolase (hiuH) (Escherichia coli O157:H7).